Consider the following 57-residue polypeptide: Large ribosomal subunit protein bL32 (57 aa).

Basic residues predominate over residues 1–19 (MATPKRRMSRANTRSRRAQ). The segment at 1 to 20 (MATPKRRMSRANTRSRRAQW) is disordered.

The protein belongs to the bacterial ribosomal protein bL32 family.

The chain is Large ribosomal subunit protein bL32 from Mycobacterium leprae (strain Br4923).